The sequence spans 433 residues: Arabinooligosaccharide-binding protein (433 aa).

Residues 1 to 21 (MKKMTVCFLVLMMLLTLVIAG) form the signal peptide. Cysteine 22 is lipidated: N-palmitoyl cysteine. A lipid anchor (S-diacylglycerol cysteine) is attached at cysteine 22.

Belongs to the bacterial solute-binding protein 1 family. In terms of assembly, the complex is composed of two ATP-binding proteins (MsmX), two transmembrane proteins (AraP and AraQ) and a solute-binding protein (AraN).

It is found in the cell membrane. Part of the ABC transporter complex AraNPQ involved in the uptake of arabinooligosaccharides. Transports alpha-1,5-arabinooligosaccharides, at least up to four L-arabinosyl units. AraN captures the substrate and delivers it to the two transmembrane components. The protein is Arabinooligosaccharide-binding protein of Bacillus subtilis (strain 168).